A 134-amino-acid chain; its full sequence is ATP synthase epsilon chain, chloroplastic (134 aa).

This sequence belongs to the ATPase epsilon chain family. As to quaternary structure, F-type ATPases have 2 components, CF(1) - the catalytic core - and CF(0) - the membrane proton channel. CF(1) has five subunits: alpha(3), beta(3), gamma(1), delta(1), epsilon(1). CF(0) has three main subunits: a, b and c.

It is found in the plastid. The protein localises to the chloroplast thylakoid membrane. Produces ATP from ADP in the presence of a proton gradient across the membrane. The chain is ATP synthase epsilon chain, chloroplastic from Drimys granadensis.